The following is a 396-amino-acid chain: Chaperone protein DnaJ (396 aa).

The 66-residue stretch at 6-71 (DYYEVLEVTK…DKRSRYDQFG (66 aa)) folds into the J domain. The CR-type zinc finger occupies 154-236 (GVEKKFKLKK…CGGDGIVYGE (83 aa)). 8 residues coordinate Zn(2+): cysteine 167, cysteine 170, cysteine 184, cysteine 187, cysteine 210, cysteine 213, cysteine 224, and cysteine 227. CXXCXGXG motif repeat units follow at residues 167 to 174 (CNHCHGTG), 184 to 191 (CPTCKGSG), 210 to 217 (CPTCNGEG), and 224 to 231 (CKECGGDG).

This sequence belongs to the DnaJ family. Homodimer. Requires Zn(2+) as cofactor.

It localises to the cytoplasm. Its function is as follows. Participates actively in the response to hyperosmotic and heat shock by preventing the aggregation of stress-denatured proteins and by disaggregating proteins, also in an autonomous, DnaK-independent fashion. Unfolded proteins bind initially to DnaJ; upon interaction with the DnaJ-bound protein, DnaK hydrolyzes its bound ATP, resulting in the formation of a stable complex. GrpE releases ADP from DnaK; ATP binding to DnaK triggers the release of the substrate protein, thus completing the reaction cycle. Several rounds of ATP-dependent interactions between DnaJ, DnaK and GrpE are required for fully efficient folding. Also involved, together with DnaK and GrpE, in the DNA replication of plasmids through activation of initiation proteins. This chain is Chaperone protein DnaJ, found in Bacteroides thetaiotaomicron (strain ATCC 29148 / DSM 2079 / JCM 5827 / CCUG 10774 / NCTC 10582 / VPI-5482 / E50).